A 461-amino-acid polypeptide reads, in one-letter code: Histone acetyltransferase KAT5 (461 aa).

The 58-residue stretch at 8–65 folds into the Tudor-knot domain; it reads IEGCRLPVLRRNQDNEDEWPLAEILSVKDISGRKLFYVHYIDFNKRLDEWVTHERLDL. K52 bears the N6-acetyllysine mark. The segment at 70-168 is disordered; that stretch reads FPKKEAKTPT…RMTGSLVSDR (99 aa). Phosphoserine is present on residues S86 and S90. The span at 90-100 shows a compositional bias: basic and acidic residues; sequence SPEREVKRKVE. An N6-acetyllysine; by autocatalysis mark is found at K96, K98, K135, and K137. At S147 the chain carries Phosphoserine. In terms of domain architecture, MYST-type HAT spans 175–452; sequence TRMKNIECIE…IDSKCLHFTP (278 aa). Residues 208 to 233 form a C2HC MYST-type zinc finger; the sequence is LYLCEFCLKYGRSLKCLQRHLTKCDL. Residue K275 is modified to N6-acetyllysine; by autocatalysis. Residues 316-461 form an interaction with ATF2 region; sequence ACILTLPPYQ…PKDWSKRGKW (146 aa). Residues 318–320 and 325–331 each bind acetyl-CoA; these read ILT and QRRGYGK. E351 serves as the catalytic Proton donor/acceptor. S355 and S364 together coordinate acetyl-CoA. K378 is covalently cross-linked (Glycyl lysine isopeptide (Lys-Gly) (interchain with G-Cter in SUMO1); alternate). K378 participates in a covalent cross-link: Glycyl lysine isopeptide (Lys-Gly) (interchain with G-Cter in SUMO2); alternate. K399 is covalently cross-linked (Glycyl lysine isopeptide (Lys-Gly) (interchain with G-Cter in SUMO1)).

The protein belongs to the MYST (SAS/MOZ) family. In terms of assembly, component of the NuA4 histone acetyltransferase complex which contains the catalytic subunit KAT5/TIP60 and the subunits EP400, TRRAP/PAF400, BRD8/SMAP, EPC1, DMAP1/DNMAP1, RUVBL1/TIP49, RUVBL2, ING3, actin, ACTL6A/BAF53A, MORF4L1/MRG15, MORF4L2/MRGX, MRGBP, YEATS4/GAS41, VPS72/YL1 and MEAF6. KAT5/TIP60, EPC1, and ING3 together constitute a minimal HAT complex termed Piccolo NuA4. The NuA4 complex interacts with MYC. Interacts with ATM. Interacts with JADE1. Interacts with PLA2G4A/CPLA2, EDNRA and HDAC7. Interacts with the cytoplasmic tail of APP and APBB1/FE65. Interacts with TRIM24 and TRIM68. Forms a complex with SENP6 and UBE2I in response to UV irradiation. Identified in a complex with HINT1. Interacts with ATF2 and CUL3. Interacts with NR1D2 (via N-terminus). Component of a SWR1-like complex. Interacts with FOXP3. Interacts with ZBTB49. Interacts with SRF. Interacts with ATF3; promoting autoacetylation and deubiquitination by USP7. Interacts with EP300/p300; interaction promotes KAT5 autoacetylation. Interacts with PRKDC; interaction is impaired following KAT5 sumoylation. Interacts with GPR50. In terms of processing, phosphorylated on Ser-86 and Ser-90; enhanced during G2/M phase. The phosphorylated form has a higher activity. Phosphorylation at Ser-90 by CDK1 or CDK9 is a prerequisite for phosphorylation at Ser-86 by GSK3. Phosphorylation at Ser-86 by GSK3 (GSK3A or GSK3B) activates acetyltransferase and acyltransferase activities. Phosphorylation at Ser-90 by CDK9 promotes KAT5 recruitment to chromatin. Phosphorylation by VRK1 following DNA damage promotes KAT5 association with chromatin and histone acetyltransferase activity. Post-translationally, autoacetylated. Autoacetylation is required for histone acetyltransferase activity. Autoacetylation at Lys-275 is facilitated by interaction with EP300/p300: it prevents ubiquitination and subsequent degradation by the proteasome and promotes acetylation of target proteins. Deacetylated by HDAC3 and SIRT1. Deacetylation by HDAC3 promotes its ubiquitination and cytoplasmic localization. Sumoylated by UBE2I at Lys-378 and Lys-399, leading to increase of its histone acetyltransferase activity in UV-induced DNA damage response, as well as its translocation to nuclear bodies. Sumoylation with SUMO2 by PIAS4 at Lys-378 promotes repair of DNA double-strand breaks (DSBs) via homologous recombination (HR). Sumoylation by PIAS4 impairs interaction with PRKDC, inhibiting non-homologous end joining (NHEJ)-mediated repair of DSBs, thereby facilitating HR. Desumoylated by SENP3. In terms of processing, ubiquitinated by MDM2, leading to its proteasome-dependent degradation. Ubiquitination is prevented by autoacetylation at Lys-275. Ubiquitinated following deacetylation by HDAC3, leading to cytoplasmic localization. Deubiquitinated by USP7 following interaction with ATF3, promoting its stabilization.

It localises to the nucleus. It is found in the chromosome. The protein resides in the cytoplasm. Its subcellular location is the centromere. The protein localises to the kinetochore. It localises to the cytoskeleton. It is found in the spindle pole. The protein resides in the nucleolus. Its subcellular location is the perinuclear region. It catalyses the reaction L-lysyl-[histone] + acetyl-CoA = N(6)-acetyl-L-lysyl-[histone] + CoA + H(+). The enzyme catalyses L-lysyl-[protein] + acetyl-CoA = N(6)-acetyl-L-lysyl-[protein] + CoA + H(+). It carries out the reaction (2E)-butenoyl-CoA + L-lysyl-[protein] = N(6)-(2E)-butenoyl-L-lysyl-[protein] + CoA + H(+). The catalysed reaction is 2-hydroxyisobutanoyl-CoA + L-lysyl-[protein] = N(6)-(2-hydroxyisobutanoyl)-L-lysyl-[protein] + CoA + H(+). It catalyses the reaction (S)-lactoyl-CoA + L-lysyl-[protein] = N(6)-[(S)-lactoyl]-L-lysyl-[protein] + CoA + H(+). Acyltransferase and acetyltransferase activities are activated by phosphorylation and autoacetylation. Autoacetylation activates the histone acetyltransferase activity. Catalytic subunit of the NuA4 histone acetyltransferase complex, a multiprotein complex involved in transcriptional activation of select genes principally by acetylation of nucleosomal histones H2A and H4. Histone acetylation alters nucleosome-DNA interactions and promotes interaction of the modified histones with other proteins which positively regulate transcription. The NuA4 histone acetyltransferase complex is required for the activation of transcriptional programs associated with proto-oncogene mediated growth induction, tumor suppressor mediated growth arrest and replicative senescence, apoptosis, and DNA repair. The NuA4 complex plays a direct role in repair of DNA double-strand breaks (DSBs) by promoting homologous recombination (HR): the complex inhibits TP53BP1 binding to chromatin via MBTD1, which recognizes and binds histone H4 trimethylated at 'Lys-20' (H4K20me), and KAT5 that catalyzes acetylation of 'Lys-15' of histone H2A (H2AK15ac), thereby blocking the ubiquitination mark required for TP53BP1 localization at DNA breaks. Also involved in DSB repair by mediating acetylation of 'Lys-5' of histone H2AX (H2AXK5ac), promoting NBN/NBS1 assembly at the sites of DNA damage. The NuA4 complex plays a key role in hematopoietic stem cell maintenance and is required to maintain acetylated H2A.Z/H2AZ1 at MYC target genes. The NuA4 complex is also required for spermatid development by promoting acetylation of histones: histone hyperacetylation is required for histone replacement during the transition from round to elongating spermatids. Component of a SWR1-like complex that specifically mediates the removal of histone H2A.Z/H2AZ1 from the nucleosome. Also acetylates non-histone proteins, such as BMAL1, ATM, AURKB, CHKA, CGAS, ERCC4/XPF, LPIN1, TP53/p53, NDC80/HEC1, NR1D2, RAN, SOX4, FOXP3, SQSTM1, ULK1 and RUBCNL/Pacer. Directly acetylates and activates ATM. Promotes nucleotide excision repair (NER) by mediating acetylation of ERCC4/XPF, thereby promoting formation of the ERCC4-ERCC1 complex. Relieves NR1D2-mediated inhibition of APOC3 expression by acetylating NR1D2. Acts as a regulator of regulatory T-cells (Treg) by catalyzing FOXP3 acetylation, thereby promoting FOXP3 transcriptional repressor activity. Involved in skeletal myoblast differentiation by mediating acetylation of SOX4. Catalyzes acetylation of APBB1/FE65, increasing its transcription activator activity. Promotes transcription elongation during the activation phase of the circadian cycle by catalyzing acetylation of BMAL1, promoting elongation of circadian transcripts. Together with GSK3 (GSK3A or GSK3B), acts as a regulator of autophagy: phosphorylated at Ser-86 by GSK3 under starvation conditions, leading to activate acetyltransferase activity and promote acetylation of key autophagy regulators, such as ULK1 and RUBCNL/Pacer. Acts as a regulator of the cGAS-STING innate antiviral response by catalyzing acetylation the N-terminus of CGAS, thereby promoting CGAS DNA-binding and activation. Also regulates lipid metabolism by mediating acetylation of CHKA or LPIN1. Promotes lipolysis of lipid droplets following glucose deprivation by mediating acetylation of isoform 1 of CHKA, thereby promoting monomerization of CHKA and its conversion into a tyrosine-protein kinase. Acts as a regulator of fatty-acid-induced triacylglycerol synthesis by catalyzing acetylation of LPIN1, thereby promoting the synthesis of diacylglycerol. In addition to protein acetyltransferase, can use different acyl-CoA substrates, such as (2E)-butenoyl-CoA (crotonyl-CoA), S-lactoyl-CoA (lactyl-CoA) and 2-hydroxyisobutanoyl-CoA (2-hydroxyisobutyryl-CoA), and is able to mediate protein crotonylation, lactylation and 2-hydroxyisobutyrylation, respectively. Acts as a key regulator of chromosome segregation and kinetochore-microtubule attachment during mitosis by mediating acetylation or crotonylation of target proteins. Catalyzes acetylation of AURKB at kinetochores, increasing AURKB activity and promoting accurate chromosome segregation in mitosis. Acetylates RAN during mitosis, promoting microtubule assembly at mitotic chromosomes. Acetylates NDC80/HEC1 during mitosis, promoting robust kinetochore-microtubule attachment. Catalyzes crotonylation of MAPRE1/EB1, thereby ensuring accurate spindle positioning in mitosis. Catalyzes lactylation of NBN/NBS1 in response to DNA damage, thereby promoting DNA double-strand breaks (DSBs) via homologous recombination (HR). This Pongo abelii (Sumatran orangutan) protein is Histone acetyltransferase KAT5.